Consider the following 392-residue polypeptide: Chorismate synthase (392 aa).

Positions 40 and 46 each coordinate NADP(+). FMN contacts are provided by residues Arg135–Ser137, Gln256–Ala257, Gly300, Lys315–Ser319, and Arg341.

This sequence belongs to the chorismate synthase family. As to quaternary structure, homotetramer. FMNH2 is required as a cofactor.

It carries out the reaction 5-O-(1-carboxyvinyl)-3-phosphoshikimate = chorismate + phosphate. It functions in the pathway metabolic intermediate biosynthesis; chorismate biosynthesis; chorismate from D-erythrose 4-phosphate and phosphoenolpyruvate: step 7/7. Catalyzes the anti-1,4-elimination of the C-3 phosphate and the C-6 proR hydrogen from 5-enolpyruvylshikimate-3-phosphate (EPSP) to yield chorismate, which is the branch point compound that serves as the starting substrate for the three terminal pathways of aromatic amino acid biosynthesis. This reaction introduces a second double bond into the aromatic ring system. The chain is Chorismate synthase from Salinispora tropica (strain ATCC BAA-916 / DSM 44818 / JCM 13857 / NBRC 105044 / CNB-440).